The chain runs to 318 residues: Fibronectin type III domain-containing protein 11 (318 aa).

One can recognise a Fibronectin type-III domain in the interval 210–307 (VVFDRKASAA…DSLTLHTKPE (98 aa)).

The sequence is that of Fibronectin type III domain-containing protein 11 (FNDC11) from Homo sapiens (Human).